A 182-amino-acid chain; its full sequence is Ribosome-recycling factor (182 aa).

Residues 136–156 (IRKQEKNSDISKDESRDLQDK) form a disordered region.

Belongs to the RRF family.

The protein resides in the cytoplasm. Its function is as follows. Responsible for the release of ribosomes from messenger RNA at the termination of protein biosynthesis. May increase the efficiency of translation by recycling ribosomes from one round of translation to another. This is Ribosome-recycling factor from Trichodesmium erythraeum (strain IMS101).